Consider the following 165-residue polypeptide: Peptide deformylase (165 aa).

Fe cation is bound by residues C93 and H135. Residue E136 is part of the active site. Position 139 (H139) interacts with Fe cation.

It belongs to the polypeptide deformylase family. Fe(2+) serves as cofactor.

The catalysed reaction is N-terminal N-formyl-L-methionyl-[peptide] + H2O = N-terminal L-methionyl-[peptide] + formate. Functionally, removes the formyl group from the N-terminal Met of newly synthesized proteins. Requires at least a dipeptide for an efficient rate of reaction. N-terminal L-methionine is a prerequisite for activity but the enzyme has broad specificity at other positions. This chain is Peptide deformylase, found in Thermodesulfovibrio yellowstonii (strain ATCC 51303 / DSM 11347 / YP87).